Reading from the N-terminus, the 344-residue chain is Aspartate-semialdehyde dehydrogenase (344 aa).

Residues 10–13 and 38–39 each bind NADP(+); these read TGQV and RS. Residue R101 coordinates phosphate. The active-site Acyl-thioester intermediate is the C131. Residue Q158 participates in substrate binding. 161–162 is an NADP(+) binding site; it reads SG. A phosphate-binding site is contributed by K228. R250 contacts substrate. The active-site Proton acceptor is H257. N326 contacts NADP(+).

The protein belongs to the aspartate-semialdehyde dehydrogenase family. As to quaternary structure, homodimer.

The catalysed reaction is L-aspartate 4-semialdehyde + phosphate + NADP(+) = 4-phospho-L-aspartate + NADPH + H(+). It functions in the pathway amino-acid biosynthesis; L-lysine biosynthesis via DAP pathway; (S)-tetrahydrodipicolinate from L-aspartate: step 2/4. Its pathway is amino-acid biosynthesis; L-methionine biosynthesis via de novo pathway; L-homoserine from L-aspartate: step 2/3. The protein operates within amino-acid biosynthesis; L-threonine biosynthesis; L-threonine from L-aspartate: step 2/5. In terms of biological role, catalyzes the NADPH-dependent formation of L-aspartate-semialdehyde (L-ASA) by the reductive dephosphorylation of L-aspartyl-4-phosphate. The protein is Aspartate-semialdehyde dehydrogenase of Corynebacterium glutamicum (strain ATCC 13032 / DSM 20300 / JCM 1318 / BCRC 11384 / CCUG 27702 / LMG 3730 / NBRC 12168 / NCIMB 10025 / NRRL B-2784 / 534).